Consider the following 214-residue polypeptide: Transmembrane emp24 domain-containing protein p24delta9 (214 aa).

Positions Met-1–Ser-24 are cleaved as a signal peptide. Residues Leu-25 to Lys-181 lie on the Lumenal side of the membrane. Residues Thr-34 to Arg-149 form the GOLD domain. A coiled-coil region spans residues Leu-164–Ala-177. Arg-167 is modified (omega-N-methylated arginine). A helical transmembrane segment spans residues Met-182–Val-202. Topologically, residues His-203–Ile-214 are cytoplasmic. Positions Phe-207–Phe-208 match the COPII vesicle coat-binding motif. The COPI vesicle coat-binding signature appears at Phe-207–Ile-214.

It belongs to the EMP24/GP25L family. In terms of assembly, probably oligomerizes with other members of the EMP24/GP25L family. Associates with the COPI vesicle coat (coatomer). Associates with the COPII vesicle coat (coatomer).

It localises to the endoplasmic reticulum membrane. The protein resides in the golgi apparatus. Its subcellular location is the cis-Golgi network membrane. It is found in the golgi stack membrane. Functionally, involved in vesicular protein trafficking. Mainly functions in the early secretory pathway. Thought to act as cargo receptor at the lumenal side for incorporation of secretory cargo molecules into transport vesicles and to be involved in vesicle coat formation at the cytoplasmic side. In Arabidopsis thaliana (Mouse-ear cress), this protein is Transmembrane emp24 domain-containing protein p24delta9.